The primary structure comprises 152 residues: Transcriptional regulator MraZ (152 aa).

2 consecutive SpoVT-AbrB domains span residues 5–52 (ATLV…TLPE) and 81–124 (ASEC…DEQV).

It belongs to the MraZ family. As to quaternary structure, forms oligomers.

Its subcellular location is the cytoplasm. It localises to the nucleoid. Its function is as follows. Negatively regulates its own expression and that of the subsequent genes in the proximal part of the division and cell wall (dcw) gene cluster. Acts by binding directly to DNA. May also regulate the expression of genes outside the dcw cluster. The polypeptide is Transcriptional regulator MraZ (Proteus mirabilis (strain HI4320)).